The primary structure comprises 361 residues: NAD-dependent protein deacetylase hst2-1 (361 aa).

The region spanning 16–276 (SVLEARTVEA…RKLARALGWE (261 aa)) is the Deacetylase sirtuin-type domain. Residues 43–63 (GAGI…TGIY) and 126–129 (QNID) contribute to the NAD(+) site. The active-site Proton acceptor is the His146. Cys154, Cys157, Cys178, and Cys181 together coordinate Zn(2+). NAD(+) is bound by residues 217–219 (GTS), 242–244 (NRE), and Cys262. Residues 294 to 328 (EEELATPRTREERLENEISRLTAEIDKTLKISDAY) adopt a coiled-coil conformation. The interval 335-361 (RLEGEPLSSPESNGTGLAHVFPHLARR) is disordered.

It belongs to the sirtuin family. Class I subfamily. Zn(2+) serves as cofactor.

It is found in the cytoplasm. The protein resides in the nucleus. The catalysed reaction is N(6)-acetyl-L-lysyl-[protein] + NAD(+) + H2O = 2''-O-acetyl-ADP-D-ribose + nicotinamide + L-lysyl-[protein]. NAD-dependent histone deacetylase, which could function in telomeric silencing, cell cycle progression and chromosome stability. The polypeptide is NAD-dependent protein deacetylase hst2-1 (Emericella nidulans (strain FGSC A4 / ATCC 38163 / CBS 112.46 / NRRL 194 / M139) (Aspergillus nidulans)).